A 1300-amino-acid chain; its full sequence is Phospholipid-transporting ATPase IK (1300 aa).

Residues 1-11 (MGTGPAQTPRS) show a composition bias toward polar residues. The tract at residues 1-98 (MGTGPAQTPR…SLGQREDLQD (98 aa)) is disordered. Topologically, residues 1–149 (MGTGPAQTPR…TAKYNFYSFL (149 aa)) are cytoplasmic. Residues 65–74 (RRHKAQPGRA) show a composition bias toward basic residues. Residues 150–171 (PLNLYEQFHRVSNLFFLIIIIL) traverse the membrane as a helical segment. The Exoplasmic loop portion of the chain corresponds to 172 to 177 (QSIPDI). The chain crosses the membrane as a helical span at residues 178 to 197 (STLPWFSLSTPMVCLLFIRA). At 198–381 (TRDLVDDMGR…TKLDLLMNKL (184 aa)) the chain is on the cytoplasmic side. Residues 382–403 (VVVIFISVVLVCLVLAFGFGFS) form a helical membrane-spanning segment. Topologically, residues 404 to 430 (VKEFKDHHYYLSGVHGSSVAAESFFVF) are exoplasmic loop. A helical membrane pass occupies residues 431–452 (WSFLILLSVTIPMSMFILSEFI). Residues 453–995 (YLGNSVFIDW…GRWSYVRICK (543 aa)) lie on the Cytoplasmic side of the membrane. The active-site 4-aspartylphosphate intermediate is D495. Residues D495, K496, T497, E596, F637, K660, R693, T763, G764, D765, R913, and K919 each coordinate ATP. D495 is a Mg(2+) binding site. T497 is a Mg(2+) binding site. Residue D939 coordinates Mg(2+). N942 and D943 together coordinate ATP. D943 contacts Mg(2+). Residues 996–1016 (FLRYFFYKSMASMMVQVWFAC) form a helical membrane-spanning segment. Residues 1017-1028 (YNGFTGQPLYEG) lie on the Exoplasmic loop side of the membrane. A helical transmembrane segment spans residues 1029–1048 (WFLALFNLLYSTLPVLYIGL). The Cytoplasmic portion of the chain corresponds to 1049–1078 (FEQDVSAEQSLEKPELYVVGQKDELFNYWV). Residues 1079-1100 (FVQAIAHGVTTSLVNFFMTLWI) form a helical membrane-spanning segment. Residues 1101–1112 (SRDTAGPASFSD) are Exoplasmic loop-facing. Residues 1113-1135 (HQSFAVVVALSCLLSITMEVILI) traverse the membrane as a helical segment. At 1136-1141 (IKYWTA) the chain is on the cytoplasmic side. A helical transmembrane segment spans residues 1142 to 1162 (LCVATILLSLGFYAIMTTTTQ). Over 1163 to 1182 (SFWLFRVSPTTFPFLYADLS) the chain is Exoplasmic loop. A helical transmembrane segment spans residues 1183-1207 (VMSSPSILLVVLLSVSINTFPVLAL). Residues 1208–1300 (RVIFPALKEL…EAASSPKESQ (93 aa)) are Cytoplasmic-facing. Positions 1272 to 1300 (RGPGVSSDIASESLDPSDEEAASSPKESQ) are disordered.

The protein belongs to the cation transport ATPase (P-type) (TC 3.A.3) family. Type IV subfamily. Requires Mg(2+) as cofactor. As to expression, isoform 3 was only detected in testis.

It localises to the cytoplasmic vesicle. Its subcellular location is the secretory vesicle. The protein resides in the acrosome membrane. The protein localises to the endoplasmic reticulum membrane. It catalyses the reaction ATP + H2O + phospholipidSide 1 = ADP + phosphate + phospholipidSide 2.. It carries out the reaction a 1,2-diacyl-sn-glycero-3-phospho-L-serine(out) + ATP + H2O = a 1,2-diacyl-sn-glycero-3-phospho-L-serine(in) + ADP + phosphate + H(+). Its function is as follows. P4-ATPase flippase which catalyzes the hydrolysis of ATP coupled to the transport of aminophospholipids from the outer to the inner leaflet of various membranes and ensures the maintenance of asymmetric distribution of phospholipids. Phospholipid translocation also seems to be implicated in vesicle formation and in uptake of lipid signaling molecules. May be responsible for the maintenance of asymmetric distribution of phosphatidylserine (PS) in spermatozoa membranes. Involved in acrosome reactions and binding of spermatozoa to zona pellucida. This chain is Phospholipid-transporting ATPase IK, found in Homo sapiens (Human).